Reading from the N-terminus, the 124-residue chain is Small ribosomal subunit protein uS12 (124 aa).

Asp-89 carries the 3-methylthioaspartic acid modification. Residues 104–124 are disordered; the sequence is LQGVKDRKQSRSKYGAKRPKK. The span at 113–124 shows a compositional bias: basic residues; that stretch reads SRSKYGAKRPKK.

The protein belongs to the universal ribosomal protein uS12 family. Part of the 30S ribosomal subunit. Contacts proteins S8 and S17. May interact with IF1 in the 30S initiation complex.

Its function is as follows. With S4 and S5 plays an important role in translational accuracy. Interacts with and stabilizes bases of the 16S rRNA that are involved in tRNA selection in the A site and with the mRNA backbone. Located at the interface of the 30S and 50S subunits, it traverses the body of the 30S subunit contacting proteins on the other side and probably holding the rRNA structure together. The combined cluster of proteins S8, S12 and S17 appears to hold together the shoulder and platform of the 30S subunit. The polypeptide is Small ribosomal subunit protein uS12 (Thiomonas delicata (Thiomonas cuprina)).